The primary structure comprises 532 residues: Mitogen-activated protein kinase kinase mkk1 (532 aa).

The Protein kinase domain occupies 235 to 505 (IVELGGLGEG…PWKMLEHPWM (271 aa)). Residues 241–249 (LGEGAGGAV) and Lys-264 contribute to the ATP site. Asp-362 functions as the Proton acceptor in the catalytic mechanism.

This sequence belongs to the protein kinase superfamily. STE Ser/Thr protein kinase family. MAP kinase kinase subfamily.

The catalysed reaction is L-seryl-[protein] + ATP = O-phospho-L-seryl-[protein] + ADP + H(+). It catalyses the reaction L-threonyl-[protein] + ATP = O-phospho-L-threonyl-[protein] + ADP + H(+). In terms of biological role, mitogen-activated protein kinase kinase, part of the mkh1-mkk1-spm1 MAPK cascade that regulates regulates vegetative growth, conidial formation, colony surface hydrophobicity, osmotic stress, cell wall integrity maintenance, carbon and nitrogen source utilization, chitin distribution, septa formation, and pathogenicity. This is Mitogen-activated protein kinase kinase mkk1 from Cytospora mali (Apple Valsa canker fungus).